The chain runs to 415 residues: Levansucrase LscA (415 aa).

Trp45, Asp46, Ala132, Arg202, and Asp203 together coordinate sucrose. The active-site Nucleophile is Asp46. The active-site Proton donor/acceptor is the Glu287.

This sequence belongs to the glycosyl hydrolase 68 family.

The protein localises to the periplasm. It catalyses the reaction [6)-beta-D-fructofuranosyl-(2-&gt;](n) alpha-D-glucopyranoside + sucrose = [6)-beta-D-fructofuranosyl-(2-&gt;](n+1) alpha-D-glucopyranoside + D-glucose. Its function is as follows. Catalyzes the synthesis of levan, a fructose polymer, by transferring the fructosyl moiety from sucrose to a growing acceptor molecule. LscA encodes a functional enzyme in vitro, when expressed in E.coli under control of the vector-based lactose promoter (Plac), and it can restore levan production to the lscB-lscC double mutant. However, lscA is not expressed in P.savastanoi pv. glycinea PG4180 under standard conditions. It could be an ancestral Lsc variant in P.syringae. This chain is Levansucrase LscA, found in Pseudomonas savastanoi pv. glycinea (Pseudomonas syringae pv. glycinea).